Here is a 331-residue protein sequence, read N- to C-terminus: MKQTVYTASPESQQIHVWSLNHEGTLTLVQVVDVPGQVQPMVVSPDKRYLYVGVRPEFRVLAYRIAPDDGVLTFAAESALPGSPTHISTDHHGRFVFVGSYNAGNVSVTRLQDGLPVELVDVVEGLDGCHSANITPDNRTLWVPALKQDRICLFTLSDDGHLVAQEPAEVNTVEGAGPRHMVFHPNRQYAYCVNELNSSVDVWQLKNPHGEIECVQTLDMMPADFSDTRWAADIHITPDGRHLYACDRTASLITVFSVSEDGSVLSVEGFQPTEVQPRGFNIDNSGKYLIAAGQKSHHIAVYEITGTQGLLTEKGRYAVGQGPMWVVVNAY.

The protein belongs to the cycloisomerase 2 family.

The catalysed reaction is 6-phospho-D-glucono-1,5-lactone + H2O = 6-phospho-D-gluconate + H(+). Its pathway is carbohydrate degradation; pentose phosphate pathway; D-ribulose 5-phosphate from D-glucose 6-phosphate (oxidative stage): step 2/3. Catalyzes the hydrolysis of 6-phosphogluconolactone to 6-phosphogluconate. The protein is 6-phosphogluconolactonase of Salmonella choleraesuis (strain SC-B67).